A 134-amino-acid polypeptide reads, in one-letter code: Large ribosomal subunit protein uL16c (134 aa).

This sequence belongs to the universal ribosomal protein uL16 family. Part of the 50S ribosomal subunit.

The protein localises to the plastid. It localises to the chloroplast. The sequence is that of Large ribosomal subunit protein uL16c from Pinus koraiensis (Korean pine).